Consider the following 315-residue polypeptide: Homoserine kinase (315 aa).

An ATP-binding site is contributed by 96-106; the sequence is PHSRGLGSSAA.

It belongs to the GHMP kinase family. Homoserine kinase subfamily.

The protein localises to the cytoplasm. The catalysed reaction is L-homoserine + ATP = O-phospho-L-homoserine + ADP + H(+). It participates in amino-acid biosynthesis; L-threonine biosynthesis; L-threonine from L-aspartate: step 4/5. Catalyzes the ATP-dependent phosphorylation of L-homoserine to L-homoserine phosphate. This chain is Homoserine kinase, found in Mycobacterium leprae (strain Br4923).